The primary structure comprises 451 residues: Phosphoglucosamine mutase (451 aa).

The active-site Phosphoserine intermediate is the serine 102. Residues serine 102, aspartate 243, aspartate 245, and aspartate 247 each contribute to the Mg(2+) site. At serine 102 the chain carries Phosphoserine.

It belongs to the phosphohexose mutase family. Mg(2+) serves as cofactor. Post-translationally, activated by phosphorylation.

It catalyses the reaction alpha-D-glucosamine 1-phosphate = D-glucosamine 6-phosphate. Catalyzes the conversion of glucosamine-6-phosphate to glucosamine-1-phosphate. This Paramagnetospirillum magneticum (strain ATCC 700264 / AMB-1) (Magnetospirillum magneticum) protein is Phosphoglucosamine mutase.